A 141-amino-acid polypeptide reads, in one-letter code: Lutropin subunit beta (141 aa).

The signal sequence occupies residues 1-20 (MEMFQGLLLWLLLNTGGAWA). 6 disulfides stabilise this stretch: C29/C77, C43/C92, C46/C130, C54/C108, C58/C110, and C113/C120. Residue N33 is glycosylated (N-linked (GlcNAc...) asparagine).

The protein belongs to the glycoprotein hormones subunit beta family. In terms of assembly, heterodimer of a common alpha chain and a unique beta chain which confers biological specificity to thyrotropin, lutropin, follitropin and gonadotropin.

The protein localises to the secreted. Promotes spermatogenesis and ovulation by stimulating the testes and ovaries to synthesize steroids. The sequence is that of Lutropin subunit beta (LHB) from Ailuropoda melanoleuca (Giant panda).